We begin with the raw amino-acid sequence, 365 residues long: Palmitoyltransferase ZDHHC20 (365 aa).

Residues 1 to 14 (MAPWTLWRCCQRVV) lie on the Cytoplasmic side of the membrane. A helical membrane pass occupies residues 15-35 (GWVPVLFITFVVVWSYYAYVV). Residues 36–53 (ELCVFTIFGNEENGKTVV) lie on the Lumenal side of the membrane. Residues 54–74 (YLVAFHLFFVMFVWSYWMTIF) traverse the membrane as a helical segment. The Cytoplasmic segment spans residues 75-169 (TSPASPSKEF…NNCVGFSNYK (95 aa)). A DHHC domain is found at 126-176 (RYCEKCQLIKPDRAHHCSACDSCILKMDHHCPWVNNCVGFSNYKFFLLFLL). Zn(2+) is bound by residues C128 and C131. Residues K135 and 140–143 (HHCS) contribute to the substrate site. The Zn(2+) site is built by H141, C142, C145, C148, and H155. C156 acts as the S-palmitoyl cysteine intermediate in catalysis. Residue C162 coordinates Zn(2+). Residues 170–190 (FFLLFLLYSLLYCLFVAATVL) form a helical membrane-spanning segment. Residues 191-207 (EYFIKFWTNELTDTRAK) lie on the Lumenal side of the membrane. A helical membrane pass occupies residues 208-231 (FHVLFLFFVSAMFFISVLSLFSYH). The Cytoplasmic segment spans residues 232-365 (CWLVGKNRTT…NNHVTVAIEN (134 aa)). 3 positions are modified to phosphoserine: S305, S330, and S339.

This sequence belongs to the DHHC palmitoyltransferase family. Post-translationally, autopalmitoylated (in vitro).

Its subcellular location is the golgi apparatus membrane. The protein localises to the cell membrane. The protein resides in the cytoplasm. It localises to the perinuclear region. It is found in the endoplasmic reticulum membrane. Its subcellular location is the endoplasmic reticulum-Golgi intermediate compartment membrane. It catalyses the reaction L-cysteinyl-[protein] + hexadecanoyl-CoA = S-hexadecanoyl-L-cysteinyl-[protein] + CoA. It carries out the reaction L-cysteinyl-[protein] + tetradecanoyl-CoA = S-tetradecanoyl-L-cysteinyl-[protein] + CoA. The catalysed reaction is L-cysteinyl-[protein] + octadecanoyl-CoA = S-octadecanoyl-L-cysteinyl-[protein] + CoA. Functionally, palmitoyltransferase that could catalyze the addition of palmitate onto various protein substrates. Catalyzes palmitoylation of Cys residues in the cytoplasmic C-terminus of EGFR, and modulates the duration of EGFR signaling by modulating palmitoylation-dependent EGFR internalization and degradation. Has a preference for acyl-CoA with C16 fatty acid chains. Can also utilize acyl-CoA with C14 and C18 fatty acid chains. May palmitoylate CALHM1 subunit of gustatory voltage-gated ion channels and modulate channel gating and kinetics. (Microbial infection) Dominant palmitoyltransferase responsible for lipidation of SARS coronavirus-2/SARS-CoV-2 spike protein. Through a sequential action with ZDHHC9, rapidly and efficiently palmitoylates spike protein following its synthesis in the endoplasmic reticulum (ER). In the infected cell, promotes spike biogenesis by protecting it from premature ER degradation, increases half-life and controls the lipid organization of its immediate membrane environment. Once the virus has formed, spike palmitoylation controls fusion with the target cell. This chain is Palmitoyltransferase ZDHHC20, found in Homo sapiens (Human).